Here is a 240-residue protein sequence, read N- to C-terminus: Uridylate kinase (240 aa).

Residue 12–15 coordinates ATP; it reads KLSG. Positions 20–25 are involved in allosteric activation by GTP; it reads GDKGFG. Residue Gly54 coordinates UMP. Residues Gly55 and Arg59 each coordinate ATP. Residues Asp74 and 135-142 contribute to the UMP site; that span reads TGSPYFST. ATP contacts are provided by Asn163, Tyr169, and Asp172.

It belongs to the UMP kinase family. Homohexamer.

The protein localises to the cytoplasm. It catalyses the reaction UMP + ATP = UDP + ADP. It functions in the pathway pyrimidine metabolism; CTP biosynthesis via de novo pathway; UDP from UMP (UMPK route): step 1/1. Allosterically activated by GTP. Inhibited by UTP. Functionally, catalyzes the reversible phosphorylation of UMP to UDP. This Limosilactobacillus reuteri (strain DSM 20016) (Lactobacillus reuteri) protein is Uridylate kinase.